Consider the following 64-residue polypeptide: Large ribosomal subunit protein bL35 (64 aa).

This sequence belongs to the bacterial ribosomal protein bL35 family.

The chain is Large ribosomal subunit protein bL35 from Vibrio metschnikovii.